The sequence spans 123 residues: Small ribosomal subunit protein eS25 (123 aa).

Residues 1–13 (MPPKKDTKGDSKK) are compositionally biased toward basic and acidic residues. The interval 1-34 (MPPKKDTKGDSKKGQKAKAGSGGGKAKKKKWSKG) is disordered. Positions 25–34 (KAKKKKWSKG) are enriched in basic residues.

This sequence belongs to the eukaryotic ribosomal protein eS25 family.

This is Small ribosomal subunit protein eS25 (RPS25) from Branchiostoma belcheri (Amphioxus).